A 198-amino-acid polypeptide reads, in one-letter code: Transcription factor elt-7 (198 aa).

Residues 1–18 (MLPETTTLQPLPSVTTIM) show a composition bias toward polar residues. Residues 1 to 20 (MLPETTTLQPLPSVTTIMNE) are disordered. The GATA-type zinc-finger motif lies at 143–167 (CSHCSTTTTTLWRKNDEGNLECNAC).

It is found in the nucleus. Its function is as follows. Transcriptional activator that binds to the consensus sequence 5'-[AT]GATA[AG]-3'. Required for gut-specific differentiation, specifically acting with the GATA region-binding transcription factor elt-2 to control normal gene expression and promote normal formation of the intestine. May have a protective role in response to infection by Gram-negative bacteria such as P.aeruginosa. This Caenorhabditis elegans protein is Transcription factor elt-7.